The chain runs to 707 residues: D-(-)-3-hydroxybutyrate oligomer hydrolase (707 aa).

The N-terminal stretch at 1 to 32 (MASVFKVRSASGHVPVVRTLAAMMAVTVVLTA) is a signal peptide. Ser321 (charge relay system) is an active-site residue.

It belongs to the D-(-)-3-hydroxybutyrate oligomer hydrolase family.

The protein localises to the secreted. The catalysed reaction is (3R)-hydroxybutanoate dimer + H2O = 2 (R)-3-hydroxybutanoate + H(+). Its pathway is lipid metabolism; butanoate metabolism. Participates in the degradation of poly-3-hydroxybutyrate (PHB). It works downstream of poly(3-hydroxybutyrate) depolymerase, hydrolyzing D(-)-3-hydroxybutyrate oligomers of various length (3HB-oligomers) into 3HB-monomers. In Paraburkholderia xenovorans (strain LB400), this protein is D-(-)-3-hydroxybutyrate oligomer hydrolase.